The following is a 214-amino-acid chain: Putative pit accessory protein (214 aa).

Belongs to the UPF0111 family.

Its function is as follows. Could be involved in orthophosphate transport. This Rhizobium meliloti (strain 1021) (Ensifer meliloti) protein is Putative pit accessory protein.